A 322-amino-acid polypeptide reads, in one-letter code: Probable 5-dehydro-4-deoxyglucarate dehydratase 2 (322 aa).

Belongs to the DapA family.

The enzyme catalyses 5-dehydro-4-deoxy-D-glucarate + H(+) = 2,5-dioxopentanoate + CO2 + H2O. It participates in carbohydrate acid metabolism; D-glucarate degradation; 2,5-dioxopentanoate from D-glucarate: step 2/2. In Streptomyces coelicolor (strain ATCC BAA-471 / A3(2) / M145), this protein is Probable 5-dehydro-4-deoxyglucarate dehydratase 2.